The sequence spans 304 residues: UDP-N-acetylenolpyruvoylglucosamine reductase (304 aa).

Residues Lys-31–Gly-196 enclose the FAD-binding PCMH-type domain. Arg-175 is an active-site residue. The Proton donor role is filled by Ser-225. Glu-295 is an active-site residue.

This sequence belongs to the MurB family. The cofactor is FAD.

The protein resides in the cytoplasm. The enzyme catalyses UDP-N-acetyl-alpha-D-muramate + NADP(+) = UDP-N-acetyl-3-O-(1-carboxyvinyl)-alpha-D-glucosamine + NADPH + H(+). It functions in the pathway cell wall biogenesis; peptidoglycan biosynthesis. In terms of biological role, cell wall formation. The chain is UDP-N-acetylenolpyruvoylglucosamine reductase from Streptococcus thermophilus (strain ATCC BAA-491 / LMD-9).